A 760-amino-acid polypeptide reads, in one-letter code: Cellulose synthase-like protein G1 (760 aa).

2 helical membrane passes run 28–48 (IYAI…VHSL) and 54–74 (TLIT…WATT). Residues Asp-142 and Asp-447 contribute to the active site. 5 helical membrane-spanning segments follow: residues 530-550 (IPLT…VSVF), 558-578 (FWLY…DFLL), 593-613 (LMIK…LKTL), 656-676 (VAIV…FCGG), and 680-700 (LELM…GAMV).

This sequence belongs to the glycosyltransferase 2 family. Plant cellulose synthase-like G subfamily. As to expression, expressed in young seedlings, primarily in the vascular tissue.

The protein resides in the golgi apparatus membrane. Functionally, thought to be a Golgi-localized beta-glycan synthase that polymerize the backbones of noncellulosic polysaccharides (hemicelluloses) of plant cell wall. The sequence is that of Cellulose synthase-like protein G1 (CSLG1) from Arabidopsis thaliana (Mouse-ear cress).